A 941-amino-acid chain; its full sequence is UvrABC system protein A (941 aa).

31–38 (GLSGSGKS) is an ATP binding site. The segment at 253 to 280 (CPICGYSMRELEPRLFSFNNPAGACPTC) adopts a C4-type zinc-finger fold. ABC transporter domains follow at residues 310–587 (WDRR…PESL) and 607–937 (ANPE…RFLK). Residue 640–647 (GVSGSGKS) coordinates ATP. The C4-type zinc-finger motif lies at 740-766 (CEACQGDGVIKVEMHFLPDIYVPCDQC).

The protein belongs to the ABC transporter superfamily. UvrA family. In terms of assembly, forms a heterotetramer with UvrB during the search for lesions.

The protein resides in the cytoplasm. Its function is as follows. The UvrABC repair system catalyzes the recognition and processing of DNA lesions. UvrA is an ATPase and a DNA-binding protein. A damage recognition complex composed of 2 UvrA and 2 UvrB subunits scans DNA for abnormalities. When the presence of a lesion has been verified by UvrB, the UvrA molecules dissociate. The chain is UvrABC system protein A from Salmonella typhi.